A 372-amino-acid polypeptide reads, in one-letter code: Forkhead box protein F1-B (372 aa).

A disordered region spans residues 1–51 (MTAEIQQPPSQPPAQSSPMSAATDKHGGQPSAMESASCATKTKKTNAGIRR). Over residues 13 to 22 (PAQSSPMSAA) the composition is skewed to low complexity. A DNA-binding region (fork-head) is located at residues 54–148 (KPPYSYIALI…EEGSFRRRPR (95 aa)).

As to expression, at the late gastrula stage, expressed in the presumptive ventrolateral mesoderm. During neurulation and tailbud stages, expressed in the lateral plate mesoderm and in the neural crest-derived structures of the head and branchial arches. During tailbud stages, expressed in the pronephros and pronephros ducts and in cells that migrate from the dorsolateral plate to the ventral region of the embryo (with the notable exception of the heart). These cells may represent hematopoietic or endothelial progenitor cells.

Its subcellular location is the nucleus. Its function is as follows. Probable transcription factor. Required for smooth muscle (visceral mesoderm) differentiation during gut development. Also required for normal proliferation of the lateral plate mesoderm. Acts as a downstream mediator of bmp4-signaling. In Xenopus laevis (African clawed frog), this protein is Forkhead box protein F1-B (foxf1-b).